The primary structure comprises 324 residues: tRNA N6-adenosine threonylcarbamoyltransferase (324 aa).

Residues His107, His111, and Tyr127 each contribute to the Fe cation site. Residues 127 to 131 (YVSGG), Asp159, Gly172, Glu176, and Asn257 each bind substrate. Asp285 is a binding site for Fe cation.

It belongs to the KAE1 / TsaD family. In terms of assembly, monomer. Component of the KEOPS complex that consists of Kae1, Bud32, Cgi121 and Pcc1; the whole complex dimerizes. Requires Fe(2+) as cofactor.

The protein resides in the cytoplasm. It catalyses the reaction L-threonylcarbamoyladenylate + adenosine(37) in tRNA = N(6)-L-threonylcarbamoyladenosine(37) in tRNA + AMP + H(+). Functionally, required for the formation of a threonylcarbamoyl group on adenosine at position 37 (t(6)A37) in tRNAs that read codons beginning with adenine. Is a component of the KEOPS complex that is probably involved in the transfer of the threonylcarbamoyl moiety of threonylcarbamoyl-AMP (TC-AMP) to the N6 group of A37. Kae1 likely plays a direct catalytic role in this reaction, but requires other protein(s) of the complex to fulfill this activity. In Pyrococcus furiosus (strain ATCC 43587 / DSM 3638 / JCM 8422 / Vc1), this protein is tRNA N6-adenosine threonylcarbamoyltransferase.